The sequence spans 511 residues: Maturase K (511 aa).

The protein belongs to the intron maturase 2 family. MatK subfamily.

The protein localises to the plastid. It localises to the chloroplast. Usually encoded in the trnK tRNA gene intron. Probably assists in splicing its own and other chloroplast group II introns. In Poa pratensis (Kentucky bluegrass), this protein is Maturase K.